A 503-amino-acid polypeptide reads, in one-letter code: Nuclear respiratory factor 1 (503 aa).

A dimerization region spans residues 1–78; the sequence is MEEHGVTQTE…AHLAAAGPVG (78 aa). The segment at 36–57 is disordered; the sequence is SMLSADEDSPSSPEDTSYDDSD. Residues Ser39, Ser44, Ser46, Ser47, and Ser52 each carry the phosphoserine; by CK2 modification. Positions 88 to 116 match the Nuclear localization signal motif; that stretch reads GKKRKRPHVFESNPSIRKRQQTRLLRKLR. A DNA-binding region spans residues 109 to 305; sequence TRLLRKLRAT…SIAHLVPSQT (197 aa). A Glycyl lysine isopeptide (Lys-Gly) (interchain with G-Cter in SUMO2) cross-link involves residue Lys139. Positions 301–476 are required for transcriptional activation; it reads VPSQTVVQTF…AQGNGPVQVA (176 aa).

This sequence belongs to the NRF1/Ewg family. In terms of assembly, homodimer. Binds DNA as a dimer. Interacts with PPRC1. In terms of processing, phosphorylation enhances DNA binding. As to expression, ubiquitously expressed with strongest expression in skeletal muscle.

It localises to the nucleus. Its function is as follows. Transcription factor that activates the expression of the EIF2S1 (EIF2-alpha) gene. Links the transcriptional modulation of key metabolic genes to cellular growth and development. Implicated in the control of nuclear genes required for respiration, heme biosynthesis, and mitochondrial DNA transcription and replication. The sequence is that of Nuclear respiratory factor 1 (NRF1) from Homo sapiens (Human).